The sequence spans 620 residues: Rpb7-binding protein seb1 (620 aa).

The CID domain occupies 1-151 (MSGIAEFDGI…SLRSKLKDAM (151 aa)). 2 disordered regions span residues 151–191 (MAST…RPVE) and 327–398 (SVPL…TIPP). The residue at position 343 (serine 343) is a Phosphoserine. The segment covering 361 to 374 (PSPSHLSIPSTLPP) has biased composition (low complexity). One can recognise an RRM domain in the interval 406 to 478 (RTLFLGGITR…TTIRTKWGVG (73 aa)). A disordered region spans residues 558-620 (RGRKPYRGGP…YVSQPPWQPQ (63 aa)). Residues 570–580 (HHGERHFDSGN) show a composition bias toward basic and acidic residues.

In terms of assembly, interacts with rpb7.

It is found in the nucleus. In terms of biological role, involved in the processing of pol II transcripts. The polypeptide is Rpb7-binding protein seb1 (seb1) (Schizosaccharomyces pombe (strain 972 / ATCC 24843) (Fission yeast)).